The following is a 264-amino-acid chain: 5'-nucleotidase SurE (264 aa).

A divalent metal cation-binding residues include D10, D11, S43, and N99.

Belongs to the SurE nucleotidase family. It depends on a divalent metal cation as a cofactor.

It is found in the cytoplasm. It carries out the reaction a ribonucleoside 5'-phosphate + H2O = a ribonucleoside + phosphate. Nucleotidase that shows phosphatase activity on nucleoside 5'-monophosphates. The protein is 5'-nucleotidase SurE of Methanococcus maripaludis (strain C7 / ATCC BAA-1331).